Consider the following 312-residue polypeptide: Acetyl-coenzyme A carboxylase carboxyl transferase subunit alpha (312 aa).

In terms of domain architecture, CoA carboxyltransferase C-terminal spans 36-286 (RLDKEVKSIY…KEYFLDALRT (251 aa)).

The protein belongs to the AccA family. In terms of assembly, acetyl-CoA carboxylase is a heterohexamer composed of biotin carboxyl carrier protein (AccB), biotin carboxylase (AccC) and two subunits each of ACCase subunit alpha (AccA) and ACCase subunit beta (AccD).

Its subcellular location is the cytoplasm. The catalysed reaction is N(6)-carboxybiotinyl-L-lysyl-[protein] + acetyl-CoA = N(6)-biotinyl-L-lysyl-[protein] + malonyl-CoA. Its pathway is lipid metabolism; malonyl-CoA biosynthesis; malonyl-CoA from acetyl-CoA: step 1/1. In terms of biological role, component of the acetyl coenzyme A carboxylase (ACC) complex. First, biotin carboxylase catalyzes the carboxylation of biotin on its carrier protein (BCCP) and then the CO(2) group is transferred by the carboxyltransferase to acetyl-CoA to form malonyl-CoA. In Helicobacter pylori (strain ATCC 700392 / 26695) (Campylobacter pylori), this protein is Acetyl-coenzyme A carboxylase carboxyl transferase subunit alpha.